Reading from the N-terminus, the 918-residue chain is MEHGTLLAQPGLWTRDTSWALLYFLCYILPQTAPQVLRIGGIFETVENEPVNVEELAFKFAVTSINRNRTLMPNTTLTYDIQRINLFDSFEASRRACDQLALGVAALFGPSHSSSVSAVQSICNALEVPHIQTRWKHPSVDNKDLFYINLYPDYAAISRAILDLVLYYNWKTVTVVYEDSTGLIRLQELIKAPSRYNIKIKIRQLPSGNKDAKPLLKEMKKGKEFYVIFDCSHETAAEILKQILFMGMMTEYYHYFFTTLDLFALDLELYRYSGVNMTGFRLLNIDNPHVSSIIEKWSMERLQAPPRPETGLLDGMMTTEAALMYDAVYMVAIASHRASQLTVSSLQCHRHKPWRLGPRFMNLIKEARWDGLTGHITFNKTNGLRKDFDLDIISLKEEGTEKAAGEVSKHLYKVWKKIGIWNSNSGLNMTDSNKDKSSNITDSLANRTLIVTTILEEPYVMYRKSDKPLYGNDRFEGYCLDLLKELSNILGFIYDVKLVPDGKYGAQNDKGEWNGMVKELIDHRADLAVAPLTITYVREKVIDFSKPFMTLGISILYRKPNGTNPGVFSFLNPLSPDIWMYVLLACLGVSCVLFVIARFTPYEWYNPHPCNPDSDVVENNFTLLNSFWFGVGALMQQGSELMPKALSTRIVGGIWWFFTLIIISSYTANLAAFLTVERMESPIDSADDLAKQTKIEYGAVRDGSTMTFFKKSKISTYEKMWAFMSSRQQTALVRNSDEGIQRVLTTDYALLMESTSIEYVTQRNCNLTQIGGLIDSKGYGVGTPIGSPYRDKITIAILQLQEEGKLHMMKEKWWRGNGCPEEDNKEASALGVENIGGIFIVLAAGLVLSVFVAIGEFIYKSRKNNDIEQAFCFFYGLQCKQTHPTNSTSGTTLSTDLECGKLIREERGIRKQSSVHTV.

An N-terminal signal peptide occupies residues 1 to 30 (MEHGTLLAQPGLWTRDTSWALLYFLCYILP). The Extracellular segment spans residues 31-576 (QTAPQVLRIG…VFSFLNPLSP (546 aa)). N-linked (GlcNAc...) asparagine glycosylation is found at Asn68, Asn74, Asn276, Asn379, Asn428, Asn439, and Asn446. Positions 531, 533, and 538 each coordinate L-glutamate. Asn561 carries an N-linked (GlcNAc...) asparagine glycan. Residues 577 to 597 (DIWMYVLLACLGVSCVLFVIA) form a helical membrane-spanning segment. Residues 598 to 653 (RFTPYEWYNPHPCNPDSDVVENNFTLLNSFWFGVGALMQQGSELMPKALSTRIVGG) are Cytoplasmic-facing. The chain crosses the membrane as a helical span at residues 654 to 674 (IWWFFTLIIISSYTANLAAFL). The Extracellular portion of the chain corresponds to 675–834 (TVERMESPID…KEASALGVEN (160 aa)). Ser704 and Thr705 together coordinate L-glutamate. A Phosphoserine; by PKC modification is found at Ser725. Glu753 contributes to the L-glutamate binding site. Thr761 is modified (phosphothreonine; by PKC). The cysteines at positions 765 and 819 are disulfide-linked. Asn766 carries an N-linked (GlcNAc...) asparagine glycan. The chain crosses the membrane as a helical span at residues 835–855 (IGGIFIVLAAGLVLSVFVAIG). The Cytoplasmic segment spans residues 856–918 (EFIYKSRKNN…IRKQSSVHTV (63 aa)).

This sequence belongs to the glutamate-gated ion channel (TC 1.A.10.1) family. GRIK1 subfamily. In terms of assembly, homotetramer or heterotetramer of pore-forming glutamate receptor subunits. Tetramers may be formed by the dimerization of dimers. Can form functional heteromeric receptors with GRIK5. Can form functional heteromeric receptors with GRIK4. Interacts with KLHL17.

The protein resides in the cell membrane. The protein localises to the postsynaptic cell membrane. It catalyses the reaction Ca(2+)(in) = Ca(2+)(out). Functionally, ionotropic glutamate receptor that functions as a cation-permeable ligand-gated ion channel, gated by L-glutamate and the glutamatergic agonist kainic acid. L-glutamate acts as an excitatory neurotransmitter at many synapses in the central nervous system. Binding of the excitatory neurotransmitter L-glutamate induces a conformation change, leading to the opening of the cation channel, and thereby converts the chemical signal to an electrical impulse. The receptor then desensitizes rapidly and enters a transient inactive state, characterized by the presence of bound agonist. Its function is as follows. Ionotropic glutamate receptor that functions as a cation-permeable ligand-gated ion channel, gated by L-glutamate and the glutamatergic agonist kainic acid. The chain is Glutamate receptor ionotropic, kainate 1 (GRIK1) from Homo sapiens (Human).